The chain runs to 268 residues: Minor capsid protein VP2 (268 aa).

A compositionally biased stretch (polar residues) spans 132–144 (STPQSLGALTGRT). The tract at residues 132–199 (STPQSLGALT…SLSSAARTRS (68 aa)) is disordered. The span at 145 to 163 (NSRVSAPARSSPSALSNAP) shows a compositional bias: low complexity. Positions 164–178 (TATSLHSNQTVSTRL) are enriched in polar residues. The segment covering 179–195 (GSSAGSGTGVSSLSSAA) has biased composition (low complexity).

This sequence belongs to the norovirus VP2 family. In terms of assembly, homooligomer. The portal-like structure consists in 12 copies of VP2. Interacts with capsid protein VP1.

Its subcellular location is the virion. It localises to the host cytoplasm. Functionally, minor structural protein that forms a portal-like structure at a unique three-fold axis of symmetry, following binding to the host receptor. The channel formed by VP2 may allow the delivery of the viral genome through the host endosomal membrane. The sequence is that of Minor capsid protein VP2 from Lordsdale virus (strain GII/Human/United Kingdom/Lordsdale/1993) (Human enteric calicivirus).